The chain runs to 175 residues: Early E1A protein (175 aa).

The tract at residues 40–48 (PSLHDLFDL) is interaction with RB1 in competition with E2F1. Residues 106 to 110 (LLCLE) carry the LXCXE motif, interaction with host RB1 motif. Residues 146–164 (CLRCAYYQEQGENSICGLC) fold into a zinc finger.

This sequence belongs to the adenoviridae E1A protein family. In terms of assembly, interacts with host UBE2I; this interaction interferes with polySUMOylation. Interacts with host RB1; this interaction induces the aberrant dissociation of RB1-E2F1 complex thereby disrupting the activity of RB1 and activating E2F1-regulated genes. Interacts with host ATF7; the interaction enhances ATF7-mediated viral transactivation activity which requires the zinc binding domains of both proteins. Isoform early E1A 32 kDa protein and isoform early E1A 26 kDa protein interact (via N-terminus) with CUL1 and E3 ubiquitin ligase RBX1; these interactions inhibit RBX1-CUL1-dependent elongation reaction of ubiquitin chains and attenuate ubiquitination of SCF(FBXW7) target proteins. Interacts (via PXLXP motif) with host ZMYND11/BS69 (via MYND-type zinc finger); this interaction inhibits E1A mediated transactivation. Interacts with host EP300; this interaction stimulates the acetylation of RB1 by recruiting EP300 and RB1 into a multimeric-protein complex. Interacts with host CTBP1 and CTBP2; this interaction seems to potentiate viral replication. Interacts with host DCAF7. Interacts with host DYRK1A. Interacts with host KPNA4; this interaction allows E1A import into the host nucleus. Interacts with host EP400; this interaction stabilizes MYC. Interacts with host TBP protein; this interaction probably disrupts the TBP-TATA complex.

It localises to the host nucleus. Its function is as follows. Plays a role in viral genome replication by driving entry of quiescent cells into the cell cycle. Stimulation of progression from G1 to S phase allows the virus to efficiently use the cellular DNA replicating machinery to achieve viral genome replication. E1A protein has both transforming and trans-activating activities. Induces the disassembly of the E2F1 transcription factor from RB1 by direct competition for the same binding site on RB1, with subsequent transcriptional activation of E2F1-regulated S-phase genes and of the E2 region of the adenoviral genome. Release of E2F1 leads to the ARF-mediated inhibition of MDM2 and causes TP53/p53 to accumulate because it is not targeted for degradation by MDM2-mediated ubiquitination anymore. This increase in TP53, in turn, would arrest the cell proliferation and direct its death but this effect is counteracted by the viral protein E1B-55K. Inactivation of the ability of RB1 to arrest the cell cycle is critical for cellular transformation, uncontrolled cellular growth and proliferation induced by viral infection. Interaction with RBX1 and CUL1 inhibits ubiquitination of the proteins targeted by SCF(FBXW7) ubiquitin ligase complex, and may be linked to unregulated host cell proliferation. The tumorigenesis-restraining activity of E1A may be related to the disruption of the host CtBP-CtIP complex through the CtBP binding motif. This is Early E1A protein from Canis lupus familiaris (Dog).